Consider the following 188-residue polypeptide: MRVMGVDPGLTRCGLSLIESGRGRQLTALDVDVVRTPSDAALAQRLLAISDAVEHWLDTHHPEVVAIERVFSQLNVTTVMGTAQAGGVIALAAAKRGVDVHFHTPSEVKAAVTGNGSADKAQVTAMVTKILALQAKPTPADAADALALAICHCWRAPTIARMAEATSRAEARAAQQRHAYLAKLKAAR.

Active-site residues include D7, E68, and D141. The Mg(2+) site is built by D7, E68, and D141.

It belongs to the RuvC family. As to quaternary structure, homodimer which binds Holliday junction (HJ) DNA. The HJ becomes 2-fold symmetrical on binding to RuvC with unstacked arms; it has a different conformation from HJ DNA in complex with RuvA. In the full resolvosome a probable DNA-RuvA(4)-RuvB(12)-RuvC(2) complex forms which resolves the HJ. Requires Mg(2+) as cofactor.

It localises to the cytoplasm. It carries out the reaction Endonucleolytic cleavage at a junction such as a reciprocal single-stranded crossover between two homologous DNA duplexes (Holliday junction).. Its function is as follows. The RuvA-RuvB-RuvC complex processes Holliday junction (HJ) DNA during genetic recombination and DNA repair. Endonuclease that resolves HJ intermediates. Cleaves cruciform DNA by making single-stranded nicks across the HJ at symmetrical positions within the homologous arms, yielding a 5'-phosphate and a 3'-hydroxyl group; requires a central core of homology in the junction. The consensus cleavage sequence is 5'-(A/T)TT(C/G)-3'. Cleavage occurs on the 3'-side of the TT dinucleotide at the point of strand exchange. HJ branch migration catalyzed by RuvA-RuvB allows RuvC to scan DNA until it finds its consensus sequence, where it cleaves and resolves the cruciform DNA. The polypeptide is Crossover junction endodeoxyribonuclease RuvC (Mycobacterium tuberculosis (strain ATCC 25177 / H37Ra)).